The following is a 411-amino-acid chain: Gamma-glutamyl phosphate reductase (411 aa).

Belongs to the gamma-glutamyl phosphate reductase family.

Its subcellular location is the cytoplasm. The enzyme catalyses L-glutamate 5-semialdehyde + phosphate + NADP(+) = L-glutamyl 5-phosphate + NADPH + H(+). It participates in amino-acid biosynthesis; L-proline biosynthesis; L-glutamate 5-semialdehyde from L-glutamate: step 2/2. In terms of biological role, catalyzes the NADPH-dependent reduction of L-glutamate 5-phosphate into L-glutamate 5-semialdehyde and phosphate. The product spontaneously undergoes cyclization to form 1-pyrroline-5-carboxylate. The polypeptide is Gamma-glutamyl phosphate reductase (Nautilia profundicola (strain ATCC BAA-1463 / DSM 18972 / AmH)).